We begin with the raw amino-acid sequence, 412 residues long: Probable cystathionine gamma-synthase 2 (412 aa).

Pyridoxal 5'-phosphate is bound by residues Tyr76, Arg78, Gly106, Met107, Tyr131, Ser226, and Thr228. Lys229 is modified (N6-(pyridoxal phosphate)lysine).

This sequence belongs to the trans-sulfuration enzymes family. Requires pyridoxal 5'-phosphate as cofactor.

It carries out the reaction O-phospho-L-homoserine + L-cysteine = L,L-cystathionine + phosphate. It catalyses the reaction O-succinyl-L-homoserine + L-cysteine = L,L-cystathionine + succinate + H(+). Its pathway is amino-acid biosynthesis; L-methionine biosynthesis via de novo pathway; L-cystathionine from O-succinyl-L-homoserine: step 1/1. Catalyzes the first committed step of methionine (Met) biosynthesis. Catalyzes the formation of L-cystathionine from homoserine esters and L-cysteine, via a gamma-replacement reaction. In Arabidopsis thaliana (Mouse-ear cress), this protein is Probable cystathionine gamma-synthase 2.